Reading from the N-terminus, the 302-residue chain is Beta-lactamase (302 aa).

Over residues 1 to 11 (MADRRRVHAWA) the composition is skewed to basic residues. Residues 1–29 (MADRRRVHAWARARPAAPEPAPPTPSAAA) form the signal peptide. The tract at residues 1–43 (MADRRRVHAWARARPAAPEPAPPTPSAAAPSVAPGPAATPPDP) is disordered. The span at 26–36 (SAAAPSVAPGP) shows a compositional bias: low complexity. Residue serine 85 is the Acyl-ester intermediate of the active site. Serine 143 contributes to the substrate binding site. The active-site Proton acceptor is glutamate 179. Position 247–249 (247–249 (KTG)) interacts with substrate.

Belongs to the class-A beta-lactamase family.

The protein localises to the secreted. It catalyses the reaction a beta-lactam + H2O = a substituted beta-amino acid. Functionally, active on penicillins but not on cephalosporins. The polypeptide is Beta-lactamase (bla) (Amycolatopsis lactamdurans (Nocardia lactamdurans)).